The chain runs to 267 residues: Phosphate import ATP-binding protein PstB (267 aa).

The region spanning 21-262 (IEVKNLNFYY…PREKRTQDYI (242 aa)) is the ABC transporter domain. Position 53–60 (53–60 (GPSGCGKS)) interacts with ATP.

Belongs to the ABC transporter superfamily. Phosphate importer (TC 3.A.1.7) family. In terms of assembly, the complex is composed of two ATP-binding proteins (PstB), two transmembrane proteins (PstC and PstA) and a solute-binding protein (PstS).

It localises to the cell inner membrane. The enzyme catalyses phosphate(out) + ATP + H2O = ADP + 2 phosphate(in) + H(+). Functionally, part of the ABC transporter complex PstSACB involved in phosphate import. Responsible for energy coupling to the transport system. The chain is Phosphate import ATP-binding protein PstB from Mesorhizobium japonicum (strain LMG 29417 / CECT 9101 / MAFF 303099) (Mesorhizobium loti (strain MAFF 303099)).